The chain runs to 263 residues: HTH-type transcriptional repressor NanR (263 aa).

Residues 30 to 98 (KKLSEMVEEE…NGERARVSRP (69 aa)) form the HTH gntR-type domain. Positions 58–77 (ERELMAFFNVGRPSVREALA) form a DNA-binding region, H-T-H motif.

Belongs to the NanR family.

Transcriptional repressor that controls expression of the genes required for the catabolism of sialic acids. The protein is HTH-type transcriptional repressor NanR of Salmonella bongori (strain ATCC 43975 / DSM 13772 / NCTC 12419).